A 247-amino-acid polypeptide reads, in one-letter code: Adenosylcobinamide-GDP ribazoletransferase (247 aa).

5 helical membrane-spanning segments follow: residues 34-54 (IITF…VFMV), 59-79 (CGAP…TGGF), 113-133 (GGLA…ELAL), 138-158 (ILAS…LLMY), and 194-214 (VLLP…AIFI).

It belongs to the CobS family. Requires Mg(2+) as cofactor.

It is found in the cell inner membrane. It catalyses the reaction alpha-ribazole + adenosylcob(III)inamide-GDP = adenosylcob(III)alamin + GMP + H(+). The catalysed reaction is alpha-ribazole 5'-phosphate + adenosylcob(III)inamide-GDP = adenosylcob(III)alamin 5'-phosphate + GMP + H(+). It functions in the pathway cofactor biosynthesis; adenosylcobalamin biosynthesis; adenosylcobalamin from cob(II)yrinate a,c-diamide: step 7/7. Joins adenosylcobinamide-GDP and alpha-ribazole to generate adenosylcobalamin (Ado-cobalamin). Also synthesizes adenosylcobalamin 5'-phosphate from adenosylcobinamide-GDP and alpha-ribazole 5'-phosphate. This is Adenosylcobinamide-GDP ribazoletransferase from Escherichia coli O157:H7.